The sequence spans 556 residues: 2-isopropylmalate synthase (556 aa).

Positions 33 to 307 (PIWCSSDLRD…NPGLDFSDID (275 aa)) constitute a Pyruvate carboxyltransferase domain. Mg(2+) is bound by residues aspartate 42, histidine 246, histidine 248, and asparagine 282. A regulatory domain region spans residues 439–556 (ANVPYALISH…SLSQTQAKAA (118 aa)).

It belongs to the alpha-IPM synthase/homocitrate synthase family. LeuA type 2 subfamily. Homodimer. Mg(2+) is required as a cofactor.

It is found in the cytoplasm. The catalysed reaction is 3-methyl-2-oxobutanoate + acetyl-CoA + H2O = (2S)-2-isopropylmalate + CoA + H(+). Its pathway is amino-acid biosynthesis; L-leucine biosynthesis; L-leucine from 3-methyl-2-oxobutanoate: step 1/4. Catalyzes the condensation of the acetyl group of acetyl-CoA with 3-methyl-2-oxobutanoate (2-ketoisovalerate) to form 3-carboxy-3-hydroxy-4-methylpentanoate (2-isopropylmalate). The polypeptide is 2-isopropylmalate synthase (Pseudomonas syringae pv. syringae (strain B728a)).